Here is a 502-residue protein sequence, read N- to C-terminus: Archaemetzincin-1 (502 aa).

A Zn(2+)-binding site is contributed by H262. The active-site Proton acceptor is the E263. 5 residues coordinate Zn(2+): H266, C273, C278, C297, and C300. Residues G336–E383 are disordered.

It belongs to the peptidase M54 family. Zn(2+) is required as a cofactor.

Functionally, probable zinc metalloprotease. This Mus musculus (Mouse) protein is Archaemetzincin-1 (Amz1).